The chain runs to 108 residues: Insulin (108 aa).

A signal peptide spans 1 to 23 (MALWILLPLLALLILWGPDPAQA). Intrachain disulfides connect Cys30–Cys94 and Cys43–Cys107. Residues 57 to 88 (EVEDPQVGQVELGAGPGAGSEQTLALEVARQA) constitute a propeptide, c peptide.

This sequence belongs to the insulin family. In terms of assembly, heterodimer of a B chain and an A chain linked by two disulfide bonds.

It is found in the secreted. Insulin decreases blood glucose concentration. It increases cell permeability to monosaccharides, amino acids and fatty acids. It accelerates glycolysis, the pentose phosphate cycle, and glycogen synthesis in liver. This is Insulin (INS) from Rodentia sp.